The chain runs to 204 residues: VEL1-related protein AC977.05c (204 aa).

The N-terminal stretch at 1 to 17 (MIFKNLISLFFIGLATA) is a signal peptide.

Belongs to the VEL1 family.

Its subcellular location is the cytoplasm. It localises to the cytosol. In Schizosaccharomyces pombe (strain 972 / ATCC 24843) (Fission yeast), this protein is VEL1-related protein AC977.05c.